A 104-amino-acid chain; its full sequence is UPF0145 protein NP_2600A (104 aa).

The protein belongs to the UPF0145 family.

In Natronomonas pharaonis (strain ATCC 35678 / DSM 2160 / CIP 103997 / JCM 8858 / NBRC 14720 / NCIMB 2260 / Gabara) (Halobacterium pharaonis), this protein is UPF0145 protein NP_2600A.